We begin with the raw amino-acid sequence, 441 residues long: Tryptophan aminotransferase-related protein 1 (441 aa).

Pyridoxal 5'-phosphate-binding positions include Y110, 152–153, N219, 239–242, 262–265, and R273; these read ST, DLAY, and TVSK. The residue at position 265 (K265) is an N6-(pyridoxal phosphate)lysine.

The protein belongs to the alliinase family. Requires pyridoxal 5'-phosphate as cofactor. As to expression, highly expressed in anthers. Expressed at low levels in ovaries.

It catalyses the reaction L-tryptophan + 2-oxoglutarate = indole-3-pyruvate + L-glutamate. It participates in plant hormone metabolism; auxin biosynthesis. Probable tryptophan aminotransferase that may be involved in the regulation of auxin production in developing rice grains. The polypeptide is Tryptophan aminotransferase-related protein 1 (Oryza sativa subsp. japonica (Rice)).